Here is a 282-residue protein sequence, read N- to C-terminus: HTH-type transcriptional activator RhaR (282 aa).

An HTH araC/xylS-type domain is found at 179 to 277 (DKLITALANS…GMTPSQWRHL (99 aa)). 2 consecutive DNA-binding regions (H-T-H motif) follow at residues 196–217 (DAFC…RAQT) and 244–267 (ISEI…TRET).

Binds DNA as a dimer.

The protein resides in the cytoplasm. In terms of biological role, activates expression of the rhaSR operon in response to L-rhamnose. The polypeptide is HTH-type transcriptional activator RhaR (Salmonella typhimurium (strain LT2 / SGSC1412 / ATCC 700720)).